A 310-amino-acid polypeptide reads, in one-letter code: UPF0324 membrane protein GSU2818 (310 aa).

9 consecutive transmembrane segments (helical) span residues 11-33 (FTIL…VMGI), 53-72 (MLLQ…GEVI), 79-97 (IWYS…YGLG), 107-129 (SALI…APVL), 136-158 (TAVA…PLVG), 193-215 (ALAI…VMAA), 227-244 (IPLF…RTLL), 254-273 (LAGV…GAGL), and 286-308 (LVQA…KLPW).

Belongs to the UPF0324 family.

The protein localises to the cell membrane. This chain is UPF0324 membrane protein GSU2818, found in Geobacter sulfurreducens (strain ATCC 51573 / DSM 12127 / PCA).